A 491-amino-acid chain; its full sequence is Protein nucleotidyltransferase YdiU (491 aa).

The ATP site is built by Gly92, Gly94, Arg95, Lys115, Asp127, Gly128, Arg178, and Arg185. The active-site Proton acceptor is Asp254. Mg(2+) is bound by residues Asn255 and Asp264. Asp264 lines the ATP pocket.

It belongs to the SELO family. It depends on Mg(2+) as a cofactor. The cofactor is Mn(2+).

It carries out the reaction L-seryl-[protein] + ATP = 3-O-(5'-adenylyl)-L-seryl-[protein] + diphosphate. The catalysed reaction is L-threonyl-[protein] + ATP = 3-O-(5'-adenylyl)-L-threonyl-[protein] + diphosphate. It catalyses the reaction L-tyrosyl-[protein] + ATP = O-(5'-adenylyl)-L-tyrosyl-[protein] + diphosphate. The enzyme catalyses L-histidyl-[protein] + UTP = N(tele)-(5'-uridylyl)-L-histidyl-[protein] + diphosphate. It carries out the reaction L-seryl-[protein] + UTP = O-(5'-uridylyl)-L-seryl-[protein] + diphosphate. The catalysed reaction is L-tyrosyl-[protein] + UTP = O-(5'-uridylyl)-L-tyrosyl-[protein] + diphosphate. Functionally, nucleotidyltransferase involved in the post-translational modification of proteins. It can catalyze the addition of adenosine monophosphate (AMP) or uridine monophosphate (UMP) to a protein, resulting in modifications known as AMPylation and UMPylation. This Pseudarthrobacter chlorophenolicus (strain ATCC 700700 / DSM 12829 / CIP 107037 / JCM 12360 / KCTC 9906 / NCIMB 13794 / A6) (Arthrobacter chlorophenolicus) protein is Protein nucleotidyltransferase YdiU.